Consider the following 212-residue polypeptide: Peptide methionine sulfoxide reductase MsrA (212 aa).

Residue cysteine 52 is part of the active site.

The protein belongs to the MsrA Met sulfoxide reductase family.

The catalysed reaction is L-methionyl-[protein] + [thioredoxin]-disulfide + H2O = L-methionyl-(S)-S-oxide-[protein] + [thioredoxin]-dithiol. It carries out the reaction [thioredoxin]-disulfide + L-methionine + H2O = L-methionine (S)-S-oxide + [thioredoxin]-dithiol. In terms of biological role, has an important function as a repair enzyme for proteins that have been inactivated by oxidation. Catalyzes the reversible oxidation-reduction of methionine sulfoxide in proteins to methionine. This chain is Peptide methionine sulfoxide reductase MsrA, found in Salmonella paratyphi B (strain ATCC BAA-1250 / SPB7).